The sequence spans 73 residues: Disintegrin mojastin-2 (73 aa).

The region spanning 1 to 73 (EAGEECDCGS…ADCPRNGLYG (73 aa)) is the Disintegrin domain. Disulfide bonds link C6–C21, C8–C16, C15–C38, C29–C35, C34–C59, and C47–C66. A Cell attachment site motif is present at residues 51 to 53 (RGD).

This sequence belongs to the venom metalloproteinase (M12B) family. P-II subfamily. P-IIa sub-subfamily. As to quaternary structure, monomer (disintegrin). As to expression, expressed by the venom gland.

The protein localises to the secreted. Its function is as follows. Inhibits the three processes involved in platelet function (adhesion, activation and aggregation). It inhibits platelet adhesion to fibronectin with an IC(50) of 58.6 nM. It inhibits ATP release from platelet induced by ADP with an IC(50) of 19.5 nM on platelet-rich plasma, probably by binding to ADP receptors (P2RY1 and P2RY12). Finally, it inhibits ADP-induced platelet aggregation with IC(50) of 44.7 nM on platelet-rich plasma and 19.3 nM on whole blood, probably by binding to alpha-IIb/beta-3 (ITGA2B/ITGB3). Inhibits ADP-induced platelet aggregation (IC(50) = 13.8 nM) probably by binding to alpha-IIb/beta-3 (ITGA2B/ITGB3) located on the platelet surface. The polypeptide is Disintegrin mojastin-2 (Crotalus scutulatus scutulatus (Mojave rattlesnake)).